A 50-amino-acid chain; its full sequence is Photosystem II reaction center protein M (50 aa).

A helical membrane pass occupies residues 7–27 (GFVASLLFVGVPTIFLIGLFI).

This sequence belongs to the PsbM family. PSII is composed of 1 copy each of membrane proteins PsbA, PsbB, PsbC, PsbD, PsbE, PsbF, PsbH, PsbI, PsbJ, PsbK, PsbL, PsbM, PsbT, PsbX, PsbY, Psb30/Ycf12, peripheral proteins PsbO, CyanoQ (PsbQ), PsbU, PsbV and a large number of cofactors. It forms dimeric complexes.

It localises to the cellular thylakoid membrane. In terms of biological role, one of the components of the core complex of photosystem II (PSII). PSII is a light-driven water:plastoquinone oxidoreductase that uses light energy to abstract electrons from H(2)O, generating O(2) and a proton gradient subsequently used for ATP formation. It consists of a core antenna complex that captures photons, and an electron transfer chain that converts photonic excitation into a charge separation. This subunit is found at the monomer-monomer interface. The polypeptide is Photosystem II reaction center protein M (Prochlorococcus marinus (strain MIT 9301)).